Reading from the N-terminus, the 192-residue chain is UPF0149 protein YgfB (192 aa).

It belongs to the UPF0149 family.

This Escherichia coli O127:H6 (strain E2348/69 / EPEC) protein is UPF0149 protein YgfB.